Here is a 272-residue protein sequence, read N- to C-terminus: Putative imidazole glycerol phosphate synthase subunit hisF2 (272 aa).

The active site involves Asp-133.

Belongs to the HisA/HisF family. As to quaternary structure, heterodimer of HisH and HisF.

It localises to the cytoplasm. It catalyses the reaction 5-[(5-phospho-1-deoxy-D-ribulos-1-ylimino)methylamino]-1-(5-phospho-beta-D-ribosyl)imidazole-4-carboxamide + L-glutamine = D-erythro-1-(imidazol-4-yl)glycerol 3-phosphate + 5-amino-1-(5-phospho-beta-D-ribosyl)imidazole-4-carboxamide + L-glutamate + H(+). Its pathway is amino-acid biosynthesis; L-histidine biosynthesis; L-histidine from 5-phospho-alpha-D-ribose 1-diphosphate: step 5/9. Functionally, IGPS catalyzes the conversion of PRFAR and glutamine to IGP, AICAR and glutamate. The HisF subunit catalyzes the cyclization activity that produces IGP and AICAR from PRFAR using the ammonia provided by the HisH subunit. This chain is Putative imidazole glycerol phosphate synthase subunit hisF2 (hisF2), found in Vibrio vulnificus (strain YJ016).